The chain runs to 207 residues: MERKERLRAGIAAMGLDISETAQDRLLVYVDLLKKWNKTYNLTALRDEEKMIVHHLLDSLTLLPHIEGVQTMLDVGSGGGQPGIPAAVCRPDVQITLLDANTKKTAFLQQAVIELGLDNVRVVSGRVEAVSDVRADVVTSRAFAELADFVSWTVHLLKDGGYWAAMKGVYPQEEIGRLPQDVCVEKVQRLDVPGLDAERHIVILSKR.

Residues Gly76, Gln81, Val127–Glu128, and Arg141 contribute to the S-adenosyl-L-methionine site.

Belongs to the methyltransferase superfamily. RNA methyltransferase RsmG family.

It is found in the cytoplasm. It carries out the reaction guanosine(527) in 16S rRNA + S-adenosyl-L-methionine = N(7)-methylguanosine(527) in 16S rRNA + S-adenosyl-L-homocysteine. In terms of biological role, specifically methylates the N7 position of guanine in position 527 of 16S rRNA. The chain is Ribosomal RNA small subunit methyltransferase G from Neisseria meningitidis serogroup B (strain ATCC BAA-335 / MC58).